We begin with the raw amino-acid sequence, 408 residues long: LL-diaminopimelate aminotransferase (408 aa).

2 residues coordinate substrate: Y15 and G42. Residues Y72, 108–109, Y132, N186, Y217, and 245–247 each bind pyridoxal 5'-phosphate; these read AK and SFS. K109, Y132, and N186 together coordinate substrate. The residue at position 248 (K248) is an N6-(pyridoxal phosphate)lysine. The pyridoxal 5'-phosphate site is built by R256 and N291. The substrate site is built by N291 and R386.

The protein belongs to the class-I pyridoxal-phosphate-dependent aminotransferase family. LL-diaminopimelate aminotransferase subfamily. Homodimer. Pyridoxal 5'-phosphate serves as cofactor.

It carries out the reaction (2S,6S)-2,6-diaminopimelate + 2-oxoglutarate = (S)-2,3,4,5-tetrahydrodipicolinate + L-glutamate + H2O + H(+). It functions in the pathway amino-acid biosynthesis; L-lysine biosynthesis via DAP pathway; LL-2,6-diaminopimelate from (S)-tetrahydrodipicolinate (aminotransferase route): step 1/1. Its function is as follows. Involved in the synthesis of meso-diaminopimelate (m-DAP or DL-DAP), required for both lysine and peptidoglycan biosynthesis. Catalyzes the direct conversion of tetrahydrodipicolinate to LL-diaminopimelate. The protein is LL-diaminopimelate aminotransferase of Desulfotalea psychrophila (strain LSv54 / DSM 12343).